Reading from the N-terminus, the 208-residue chain is Cytochrome c oxidase assembly protein CtaG (208 aa).

Topologically, residues Met-1–Gly-19 are cytoplasmic. A helical; Signal-anchor for type II membrane protein membrane pass occupies residues Arg-20–Ala-42. At Val-43–Leu-208 the chain is on the periplasmic side.

This sequence belongs to the COX11/CtaG family.

The protein localises to the cell inner membrane. Exerts its effect at some terminal stage of cytochrome c oxidase synthesis, probably by being involved in the insertion of the copper B into subunit I. The sequence is that of Cytochrome c oxidase assembly protein CtaG from Rhodopseudomonas palustris (strain HaA2).